Reading from the N-terminus, the 434-residue chain is GTPase Obg (434 aa).

One can recognise an Obg domain in the interval 4–162; the sequence is ADFIDRIVIY…RKLVLELKLL (159 aa). The region spanning 163–333 is the OBG-type G domain; that stretch reads ADVGLVGYPN…IVYKLAEIVK (171 aa). GTP contacts are provided by residues 169-176, 194-198, 215-218, 285-288, and 314-316; these read GYPNVGKS, FTTTI, DIPG, NKID, and SII. Mg(2+) is bound by residues Ser176 and Thr196. The OCT domain occupies 355–434; that stretch reads LWKELPERFN…VAQRAFEYKE (80 aa).

It belongs to the TRAFAC class OBG-HflX-like GTPase superfamily. OBG GTPase family. As to quaternary structure, monomer. Mg(2+) is required as a cofactor.

It localises to the cytoplasm. Functionally, an essential GTPase which binds GTP, GDP and possibly (p)ppGpp with moderate affinity, with high nucleotide exchange rates and a fairly low GTP hydrolysis rate. Plays a role in control of the cell cycle, stress response, ribosome biogenesis and in those bacteria that undergo differentiation, in morphogenesis control. This is GTPase Obg from Thermosipho africanus (strain TCF52B).